A 463-amino-acid chain; its full sequence is mRNA-capping enzyme subunit alpha (463 aa).

K66 serves as the catalytic N6-GMP-lysine intermediate. Residues 404–463 (WEERKSKKRTHSSISGPMLPPVAETKAPREATQSRYIDDEDWSDEADDDDEDSLKRARIE) form a disordered region. A compositionally biased stretch (acidic residues) spans 441-455 (DDEDWSDEADDDDED).

This sequence belongs to the eukaryotic GTase family. In terms of assembly, heterodimer. The mRNA-capping enzyme is composed of two separate chains alpha and beta, respectively a mRNA guanylyltransferase and an mRNA 5'-triphosphate monophosphatase.

The protein resides in the nucleus. It carries out the reaction a 5'-end diphospho-ribonucleoside in mRNA + GTP + H(+) = a 5'-end (5'-triphosphoguanosine)-ribonucleoside in mRNA + diphosphate. Its function is as follows. Second step of mRNA capping. Transfer of the GMP moiety of GTP to the 5'-end of RNA via an enzyme-GMP covalent reaction intermediate. The sequence is that of mRNA-capping enzyme subunit alpha (CEG1) from Eremothecium gossypii (strain ATCC 10895 / CBS 109.51 / FGSC 9923 / NRRL Y-1056) (Yeast).